The primary structure comprises 200 residues: MSGFKQHTGLVVPLDTANIDTDAIIPKQFLQKVNRTGFGKHLFHDWRFLDDAGQQPNPEFVMNAPRYQGASILLARENFGCGSSREHAPWALADYGIQVMIAPSFADIFYGNSINNQMIPVRLTDIEVDEIFQFVEANEGAEVAVDLEAMLVSANGKQYSFEIDEFRRHCLLNGLDNIGLTLQHADKISEYEAKIPNFLK.

It belongs to the LeuD family. LeuD type 1 subfamily. Heterodimer of LeuC and LeuD.

The enzyme catalyses (2R,3S)-3-isopropylmalate = (2S)-2-isopropylmalate. The protein operates within amino-acid biosynthesis; L-leucine biosynthesis; L-leucine from 3-methyl-2-oxobutanoate: step 2/4. Its function is as follows. Catalyzes the isomerization between 2-isopropylmalate and 3-isopropylmalate, via the formation of 2-isopropylmaleate. The sequence is that of 3-isopropylmalate dehydratase small subunit from Aliivibrio salmonicida (strain LFI1238) (Vibrio salmonicida (strain LFI1238)).